A 213-amino-acid chain; its full sequence is Thiopurine S-methyltransferase (213 aa).

Residues W10, L45, E66, and R121 each coordinate S-adenosyl-L-methionine.

It belongs to the class I-like SAM-binding methyltransferase superfamily. TPMT family.

Its subcellular location is the cytoplasm. The catalysed reaction is S-adenosyl-L-methionine + a thiopurine = S-adenosyl-L-homocysteine + a thiopurine S-methylether.. The sequence is that of Thiopurine S-methyltransferase from Aliivibrio fischeri (strain ATCC 700601 / ES114) (Vibrio fischeri).